We begin with the raw amino-acid sequence, 491 residues long: Aspartyl/glutamyl-tRNA(Asn/Gln) amidotransferase subunit B (491 aa).

It belongs to the GatB/GatE family. GatB subfamily. As to quaternary structure, heterotrimer of A, B and C subunits.

It carries out the reaction L-glutamyl-tRNA(Gln) + L-glutamine + ATP + H2O = L-glutaminyl-tRNA(Gln) + L-glutamate + ADP + phosphate + H(+). The catalysed reaction is L-aspartyl-tRNA(Asn) + L-glutamine + ATP + H2O = L-asparaginyl-tRNA(Asn) + L-glutamate + ADP + phosphate + 2 H(+). In terms of biological role, allows the formation of correctly charged Asn-tRNA(Asn) or Gln-tRNA(Gln) through the transamidation of misacylated Asp-tRNA(Asn) or Glu-tRNA(Gln) in organisms which lack either or both of asparaginyl-tRNA or glutaminyl-tRNA synthetases. The reaction takes place in the presence of glutamine and ATP through an activated phospho-Asp-tRNA(Asn) or phospho-Glu-tRNA(Gln). The sequence is that of Aspartyl/glutamyl-tRNA(Asn/Gln) amidotransferase subunit B from Burkholderia multivorans (strain ATCC 17616 / 249).